Here is a 103-residue protein sequence, read N- to C-terminus: Large ribosomal subunit protein bL21 (103 aa).

Belongs to the bacterial ribosomal protein bL21 family. As to quaternary structure, part of the 50S ribosomal subunit. Contacts protein L20.

In terms of biological role, this protein binds to 23S rRNA in the presence of protein L20. In Actinobacillus succinogenes (strain ATCC 55618 / DSM 22257 / CCUG 43843 / 130Z), this protein is Large ribosomal subunit protein bL21.